The chain runs to 144 residues: Transcriptional regulator SlyA (144 aa).

Residues 2-135 (ESPLGSDLAR…LITLIAKLEH (134 aa)) enclose the HTH marR-type domain. The segment at residues 49–72 (QIQLAKAIGIEQPSLVRTLDQLEE) is a DNA-binding region (H-T-H motif).

It belongs to the SlyA family. In terms of assembly, homodimer.

Its function is as follows. Transcription regulator that can specifically activate or repress expression of target genes. This chain is Transcriptional regulator SlyA, found in Shigella boydii serotype 18 (strain CDC 3083-94 / BS512).